Reading from the N-terminus, the 246-residue chain is tRNA pseudouridine synthase A (246 aa).

D52 serves as the catalytic Nucleophile. Y111 lines the substrate pocket.

The protein belongs to the tRNA pseudouridine synthase TruA family. As to quaternary structure, homodimer.

The enzyme catalyses uridine(38/39/40) in tRNA = pseudouridine(38/39/40) in tRNA. In terms of biological role, formation of pseudouridine at positions 38, 39 and 40 in the anticodon stem and loop of transfer RNAs. This Borreliella afzelii (strain PKo) (Borrelia afzelii) protein is tRNA pseudouridine synthase A.